The sequence spans 227 residues: Thiamine-phosphate synthase (227 aa).

4-amino-2-methyl-5-(diphosphooxymethyl)pyrimidine contacts are provided by residues Gln-50–Lys-54 and Asp-82. Positions 83 and 102 each coordinate Mg(2+). Thr-121 provides a ligand contact to 4-amino-2-methyl-5-(diphosphooxymethyl)pyrimidine. Thr-147–Ser-149 serves as a coordination point for 2-[(2R,5Z)-2-carboxy-4-methylthiazol-5(2H)-ylidene]ethyl phosphate. Residue Lys-150 participates in 4-amino-2-methyl-5-(diphosphooxymethyl)pyrimidine binding. 2-[(2R,5Z)-2-carboxy-4-methylthiazol-5(2H)-ylidene]ethyl phosphate is bound by residues Gly-178 and Leu-198–Ser-199.

It belongs to the thiamine-phosphate synthase family. It depends on Mg(2+) as a cofactor.

It catalyses the reaction 2-[(2R,5Z)-2-carboxy-4-methylthiazol-5(2H)-ylidene]ethyl phosphate + 4-amino-2-methyl-5-(diphosphooxymethyl)pyrimidine + 2 H(+) = thiamine phosphate + CO2 + diphosphate. The enzyme catalyses 2-(2-carboxy-4-methylthiazol-5-yl)ethyl phosphate + 4-amino-2-methyl-5-(diphosphooxymethyl)pyrimidine + 2 H(+) = thiamine phosphate + CO2 + diphosphate. It carries out the reaction 4-methyl-5-(2-phosphooxyethyl)-thiazole + 4-amino-2-methyl-5-(diphosphooxymethyl)pyrimidine + H(+) = thiamine phosphate + diphosphate. It functions in the pathway cofactor biosynthesis; thiamine diphosphate biosynthesis; thiamine phosphate from 4-amino-2-methyl-5-diphosphomethylpyrimidine and 4-methyl-5-(2-phosphoethyl)-thiazole: step 1/1. Condenses 4-methyl-5-(beta-hydroxyethyl)thiazole monophosphate (THZ-P) and 2-methyl-4-amino-5-hydroxymethyl pyrimidine pyrophosphate (HMP-PP) to form thiamine monophosphate (TMP). This is Thiamine-phosphate synthase from Salinibacter ruber (strain DSM 13855 / M31).